A 361-amino-acid chain; its full sequence is Phospho-N-acetylmuramoyl-pentapeptide-transferase (361 aa).

A run of 10 helical transmembrane segments spans residues 25 to 45, 73 to 93, 98 to 118, 139 to 159, 168 to 188, 200 to 220, 237 to 257, 264 to 284, 289 to 309, and 339 to 359; these read RGILAALTALFLSLWMGPAVI, TMGGSLILLTVTLSVLLWGDL, VWLVLAVMICFGAIGWYDDWI, IFGLAAGLFLYYTADVPAAIT, IALPLAGVSFVVIAYFWIVGF, GLAIMPTVLVACALGVFAYAS, AGELIIICSAIAGAGLGFLWF, VFMGDIGALSLGAVLGTIAVI, MVLVIMGGVFVIETLSVMIQV, and VIVRFWIISVVLVLIGLATLK.

The protein belongs to the glycosyltransferase 4 family. MraY subfamily. The cofactor is Mg(2+).

It is found in the cell inner membrane. The catalysed reaction is UDP-N-acetyl-alpha-D-muramoyl-L-alanyl-gamma-D-glutamyl-meso-2,6-diaminopimeloyl-D-alanyl-D-alanine + di-trans,octa-cis-undecaprenyl phosphate = di-trans,octa-cis-undecaprenyl diphospho-N-acetyl-alpha-D-muramoyl-L-alanyl-D-glutamyl-meso-2,6-diaminopimeloyl-D-alanyl-D-alanine + UMP. Its pathway is cell wall biogenesis; peptidoglycan biosynthesis. Functionally, catalyzes the initial step of the lipid cycle reactions in the biosynthesis of the cell wall peptidoglycan: transfers peptidoglycan precursor phospho-MurNAc-pentapeptide from UDP-MurNAc-pentapeptide onto the lipid carrier undecaprenyl phosphate, yielding undecaprenyl-pyrophosphoryl-MurNAc-pentapeptide, known as lipid I. This Xanthomonas axonopodis pv. citri (strain 306) protein is Phospho-N-acetylmuramoyl-pentapeptide-transferase.